Reading from the N-terminus, the 216-residue chain is Pyridoxine/pyridoxamine 5'-phosphate oxidase (216 aa).

FMN-binding positions include 64-69 (RVVLLK), 79-80 (FT), K85, K86, and Q108. K69 contacts substrate. Y126, R130, and S134 together coordinate substrate. FMN is bound by residues 143–144 (QS) and W188. A substrate-binding site is contributed by 194 to 196 (RKH). R198 provides a ligand contact to FMN.

This sequence belongs to the pyridoxamine 5'-phosphate oxidase family. Homodimer. FMN serves as cofactor.

The catalysed reaction is pyridoxamine 5'-phosphate + O2 + H2O = pyridoxal 5'-phosphate + H2O2 + NH4(+). The enzyme catalyses pyridoxine 5'-phosphate + O2 = pyridoxal 5'-phosphate + H2O2. The protein operates within cofactor metabolism; pyridoxal 5'-phosphate salvage; pyridoxal 5'-phosphate from pyridoxamine 5'-phosphate: step 1/1. Its pathway is cofactor metabolism; pyridoxal 5'-phosphate salvage; pyridoxal 5'-phosphate from pyridoxine 5'-phosphate: step 1/1. Functionally, catalyzes the oxidation of either pyridoxine 5'-phosphate (PNP) or pyridoxamine 5'-phosphate (PMP) into pyridoxal 5'-phosphate (PLP). This chain is Pyridoxine/pyridoxamine 5'-phosphate oxidase, found in Wolbachia pipientis wMel.